The chain runs to 537 residues: Glucans biosynthesis protein D (537 aa).

The segment at residues 1 to 30 (MLMYRRDFLKSVTAAWVAFGLPNPLGGAFA) is a signal peptide (tat-type signal).

The protein belongs to the OpgD/OpgG family. In terms of processing, predicted to be exported by the Tat system. The position of the signal peptide cleavage has not been experimentally proven.

It is found in the periplasm. It functions in the pathway glycan metabolism; osmoregulated periplasmic glucan (OPG) biosynthesis. Functionally, probably involved in the control of the structural glucose backbone of osmoregulated periplasmic glucans (OPGs). The polypeptide is Glucans biosynthesis protein D (Xylella fastidiosa (strain M12)).